The following is a 209-amino-acid chain: Redox-sensing transcriptional repressor Rex (209 aa).

The H-T-H motif DNA-binding region spans 16-55 (LYYRFIQNLSLSGKQRVSSAELSEAVKVDSATIRRDFSYF). NAD(+) is bound at residue 90–95 (GVGNLG).

Belongs to the transcriptional regulatory Rex family. As to quaternary structure, homodimer.

The protein localises to the cytoplasm. In terms of biological role, modulates transcription in response to changes in cellular NADH/NAD(+) redox state. This chain is Redox-sensing transcriptional repressor Rex, found in Bacillus cereus (strain Q1).